Consider the following 497-residue polypeptide: Transmembrane protein 200A (497 aa).

Residues 1 to 61 (MIATGGVITG…RGKIRLYSAS (61 aa)) are Cytoplasmic-facing. The segment covering 20-30 (TRSQYHLSAQS) has biased composition (polar residues). The tract at residues 20–44 (TRSQYHLSAQSPGPAPEKKTTKRKP) is disordered. The chain crosses the membrane as a helical span at residues 62-82 (GFFLVLGVLILMAGIAMAVLG). Over 83–127 (YWPHKDQPKAPETKMSANNTQSFGREQAGSIAQFLEQHMHSEKMK) the chain is Extracellular. N-linked (GlcNAc...) asparagine glycosylation occurs at Asn-100. A helical membrane pass occupies residues 128 to 148 (MLGPFTMGIGIFIFICANAIL). Residues 149–497 (HENRDRETKV…LKRGTSETRF (349 aa)) are Cytoplasmic-facing. Over residues 353 to 375 (SNSATESASSTSSRSSLSPGSTS) the composition is skewed to low complexity. Disordered stretches follow at residues 353–385 (SNSA…GAAR) and 400–438 (HSKS…GYTR). Basic and acidic residues predominate over residues 427 to 438 (RLDRSNSKGYTR).

This sequence belongs to the TMEM200 family.

The protein resides in the membrane. The sequence is that of Transmembrane protein 200A (tmem200a) from Danio rerio (Zebrafish).